The following is a 159-amino-acid chain: MGVYTYENEFTSDIPAPKLFKAFVLDADNLIPKIAPQAVKCAEILEGDGGPGTIKKITFGEGSHYGYVKHKIHSIDKENHTYSYSLIEGDALSDNIEKIDYETKLVSAPHGTIIKTTSKYHTKGDVEIKEEHVKAGKEKASHLFKLIEGYLKDHPSEYN.

This sequence belongs to the BetVI family. In terms of assembly, monomer.

The polypeptide is Major strawberry allergen Fra a 1-C (Fragaria ananassa (Strawberry)).